The sequence spans 500 residues: NAD(P)H-quinone oxidoreductase chain 4, chloroplastic (500 aa).

The next 13 membrane-spanning stretches (helical) occupy residues 4–24 (FPWL…IFFL), 35–55 (YTIC…CYHF), 87–107 (IGPI…AWPV), 134–154 (LLLF…LLAM), 167–187 (FILY…GVAL), 208–228 (VLEI…SPII), 242–262 (HYST…YGLI), 272–292 (AHSI…IYAA), 305–325 (IAYP…SLTD), 330–350 (GALL…FLAG), 386–406 (LALP…GIIT), 411–431 (LLIP…LTPI), and 462–482 (LFLS…PDFV).

It belongs to the complex I subunit 4 family.

Its subcellular location is the plastid. The protein resides in the chloroplast thylakoid membrane. It carries out the reaction a plastoquinone + NADH + (n+1) H(+)(in) = a plastoquinol + NAD(+) + n H(+)(out). The catalysed reaction is a plastoquinone + NADPH + (n+1) H(+)(in) = a plastoquinol + NADP(+) + n H(+)(out). This chain is NAD(P)H-quinone oxidoreductase chain 4, chloroplastic, found in Solanum tuberosum (Potato).